A 347-amino-acid chain; its full sequence is S-adenosylmethionine:tRNA ribosyltransferase-isomerase (347 aa).

The protein belongs to the QueA family. In terms of assembly, monomer.

It localises to the cytoplasm. The catalysed reaction is 7-aminomethyl-7-carbaguanosine(34) in tRNA + S-adenosyl-L-methionine = epoxyqueuosine(34) in tRNA + adenine + L-methionine + 2 H(+). Its pathway is tRNA modification; tRNA-queuosine biosynthesis. Transfers and isomerizes the ribose moiety from AdoMet to the 7-aminomethyl group of 7-deazaguanine (preQ1-tRNA) to give epoxyqueuosine (oQ-tRNA). The chain is S-adenosylmethionine:tRNA ribosyltransferase-isomerase from Pseudomonas aeruginosa (strain ATCC 15692 / DSM 22644 / CIP 104116 / JCM 14847 / LMG 12228 / 1C / PRS 101 / PAO1).